A 491-amino-acid polypeptide reads, in one-letter code: Katanin p60 ATPase-containing subunit A1 (491 aa).

The segment at 1-29 is interaction with KATNB1; the sequence is MSLQMIVENVKLAREYALLGNYDSAMVYY. Residues 1-75 are interaction with dynein and NDEL1; it reads MSLQMIVENV…VKDIMKTLES (75 aa). An interaction with microtubules; sufficient for microtubule severing activity region spans residues 1-185; it reads MSLQMIVENV…EPEANKFDGT (185 aa). Serine 42 carries the post-translational modification Phosphoserine; by DYRK2. The disordered stretch occupies residues 101-182; it reads PVPVERRPLP…AVTEPEANKF (82 aa). Over residues 145–169 the composition is skewed to basic and acidic residues; it reads HNDRGKAVRSREKKEQSKGREEKNK. Residue 249–256 participates in ATP binding; that stretch reads GPPGTGKT.

Belongs to the AAA ATPase family. Katanin p60 subunit A1 subfamily. In terms of assembly, can homooligomerize into hexameric rings, which may be promoted by interaction with microtubules. Interacts with KATNB1, which may serve as a targeting subunit. Interacts with ASPM; the katanin complex formation KATNA1:KATNB1 is required for the association of ASPM. Interacts with dynein and NDEL1. Associates with the E3 ligase complex containing DYRK2, EDD/UBR5, DDB1 and DCAF1 proteins (EDVP complex). Interacts with KLHL42 (via the kelch domains). Interacts with CUL3; the interaction is enhanced by KLHL42. Interacts with KATNB1 and KATNBL1. Interacts with CAMSAP2 and CAMSAP3; leading to regulate the length of CAMSAP-decorated microtubule stretches. Post-translationally, phosphorylation by DYRK2 triggers ubiquitination and subsequent degradation. Ubiquitinated by the BCR(KLHL42) E3 ubiquitin ligase complex, leading to its proteasomal degradation. Ubiquitinated by the EDVP E3 ligase complex and subsequently targeted for proteasomal degradation.

The protein resides in the cytoplasm. It localises to the midbody. It is found in the cytoskeleton. Its subcellular location is the microtubule organizing center. The protein localises to the centrosome. The protein resides in the spindle pole. It localises to the spindle. It catalyses the reaction n ATP + n H2O + a microtubule = n ADP + n phosphate + (n+1) alpha/beta tubulin heterodimers.. ATPase activity is stimulated by microtubules, which promote homooligomerization. ATP-dependent microtubule severing is stimulated by interaction with KATNB1. In terms of biological role, catalytic subunit of a complex which severs microtubules in an ATP-dependent manner. Microtubule severing may promote rapid reorganization of cellular microtubule arrays and the release of microtubules from the centrosome following nucleation. Microtubule release from the mitotic spindle poles may allow depolymerization of the microtubule end proximal to the spindle pole, leading to poleward microtubule flux and poleward motion of chromosome. The function in regulating microtubule dynamics at spindle poles seems to depend on the association of the katanin KATNA1:KATNB1 complex with ASPM which recruits it to microtubules. Reversely KATNA1:KATNB1 can enhance ASPM blocking activity on microtubule minus-end growth. Microtubule release within the cell body of neurons may be required for their transport into neuronal processes by microtubule-dependent motor proteins. This transport is required for axonal growth. The protein is Katanin p60 ATPase-containing subunit A1 (Katna1) of Mus musculus (Mouse).